A 343-amino-acid chain; its full sequence is Thiamine thiazole synthase 4, chloroplastic (343 aa).

Substrate contacts are provided by residues Ala89, 109–110 (EQ), Gly117, and Ala182. Cys211 is modified (2,3-didehydroalanine (Cys)). Substrate-binding positions include Asp213, His228, Met280, and 290-292 (RMG).

Belongs to the THI4 family. In terms of assembly, homooctamer. Fe cation is required as a cofactor. In terms of processing, during the catalytic reaction, a sulfide is transferred from Cys-211 to a reaction intermediate, generating a dehydroalanine residue.

It localises to the plastid. The protein localises to the chloroplast. The enzyme catalyses [ADP-thiazole synthase]-L-cysteine + glycine + NAD(+) = [ADP-thiazole synthase]-dehydroalanine + ADP-5-ethyl-4-methylthiazole-2-carboxylate + nicotinamide + 3 H2O + 2 H(+). Its function is as follows. Involved in biosynthesis of the thiamine precursor thiazole. Catalyzes the conversion of NAD and glycine to adenosine diphosphate 5-(2-hydroxyethyl)-4-methylthiazole-2-carboxylic acid (ADT), an adenylated thiazole intermediate. The reaction includes an iron-dependent sulfide transfer from a conserved cysteine residue of the protein to a thiazole intermediate. The enzyme can only undergo a single turnover, which suggests it is a suicide enzyme. May have additional roles in adaptation to various stress conditions and in DNA damage tolerance. This is Thiamine thiazole synthase 4, chloroplastic from Physcomitrium patens (Spreading-leaved earth moss).